Consider the following 74-residue polypeptide: MSKKEMILSWKNPMYRTESSYHPAGNILKELQEEEQHSIAGGTITLSTCAILSKPLGNNGYLCTVTKECMPSCN.

Positions 1-42 (MSKKEMILSWKNPMYRTESSYHPAGNILKELQEEEQHSIAGG) are excised as a propeptide. 2-oxobutanoic acid is present on threonine 43. The segment at residues 45-49 (TLSTC) is a cross-link (beta-methyllanthionine (Thr-Cys)). A 2,3-didehydroalanine (Ser) modification is found at serine 47. At threonine 48 the chain carries (Z)-2,3-didehydrobutyrine. The segment at residues 53-63 (SKPLGNNGYLC) is a cross-link (lanthionine (Ser-Cys)). 2 consecutive cross-links (beta-methyllanthionine (Thr-Cys)) follow at residues 64–69 (TVTKEC) and 66–73 (TKECMPSC).

Maturation of lantibiotics involves the enzymatic conversion of Thr, and Ser into dehydrated AA and the formation of thioether bonds with cysteine. This is followed by membrane translocation and cleavage of the modified precursor.

It is found in the secreted. It localises to the cell wall. Functionally, lanthionine-containing peptide antibiotic (lantibiotic) active on Gram-positive bacteria. The bactericidal activity of lantibiotics is based on depolarization of energized bacterial cytoplasmic membranes, initiated by the formation of aqueous transmembrane pores. When present individually, LchA1 exhibits activity towards L.lactis HP. When combined with LchA2, it displays activity towards a broad spectrum of non-pathogenic and pathogenic Gram-positive bacteria including strains of L.monocytogenes, methicillin-resistant S.aureus, S.pneumoniae and strains of vancomycin-resistant enterococci, but not towards E.faecium L4001 and BM4147-1. Combined LchA1 and LchA2 peptides also inhibit Bacillus sp. HIL-Y85/54728, L.lactis DPC3417 and B.halodurans C-125, which produce lantibiotics themselves. Inactivated by proteinase K and pronase E, but not by trypsin and chymotrypsin. The chain is Lantibiotic lichenicidin A1 from Bacillus licheniformis (strain ATCC 14580 / DSM 13 / JCM 2505 / CCUG 7422 / NBRC 12200 / NCIMB 9375 / NCTC 10341 / NRRL NRS-1264 / Gibson 46).